Consider the following 669-residue polypeptide: DNA ligase (669 aa).

Residues 31–35, 80–81, and glutamate 112 each bind NAD(+); these read DSVYD and SL. Lysine 114 functions as the N6-AMP-lysine intermediate in the catalytic mechanism. Arginine 135, glutamate 172, lysine 289, and lysine 313 together coordinate NAD(+). Residues cysteine 407, cysteine 410, cysteine 425, and cysteine 430 each contribute to the Zn(2+) site. The 79-residue stretch at 591-669 folds into the BRCT domain; it reads TDSGKLKGKT…EAEFLQLLEP (79 aa).

Belongs to the NAD-dependent DNA ligase family. LigA subfamily. Mg(2+) serves as cofactor. The cofactor is Mn(2+).

The enzyme catalyses NAD(+) + (deoxyribonucleotide)n-3'-hydroxyl + 5'-phospho-(deoxyribonucleotide)m = (deoxyribonucleotide)n+m + AMP + beta-nicotinamide D-nucleotide.. Its function is as follows. DNA ligase that catalyzes the formation of phosphodiester linkages between 5'-phosphoryl and 3'-hydroxyl groups in double-stranded DNA using NAD as a coenzyme and as the energy source for the reaction. It is essential for DNA replication and repair of damaged DNA. This chain is DNA ligase, found in Synechocystis sp. (strain ATCC 27184 / PCC 6803 / Kazusa).